Here is a 164-residue protein sequence, read N- to C-terminus: DNA-binding protein inhibitor ID-1 (164 aa).

Residues 46–98 (LPALLDEQQVNVLLYDMNGCYSRLKELVPTLPQNRKVSKVEILQHVIDYIRDL) enclose the bHLH domain. The Nuclear export signal signature appears at 91-104 (VIDYIRDLQLELNS).

In terms of assembly, heterodimer with other HLH proteins. Interacts with COPS5, IFI204, GATA4, NKX2-5, CLOCK and BMAL1. Isoform Short can form homodimers. Phosphorylated in vitro by PKA and PKC.

The protein resides in the cytoplasm. It is found in the nucleus. In terms of biological role, transcriptional regulator (lacking a basic DNA binding domain) which negatively regulates the basic helix-loop-helix (bHLH) transcription factors by forming heterodimers and inhibiting their DNA binding and transcriptional activity. Implicated in regulating a variety of cellular processes, including cellular growth, senescence, differentiation, apoptosis, angiogenesis, and neoplastic transformation. Inhibits skeletal muscle and cardiac myocyte differentiation. Regulates the circadian clock by repressing the transcriptional activator activity of the CLOCK-BMAL1 heterodimer. The chain is DNA-binding protein inhibitor ID-1 (Id1) from Rattus norvegicus (Rat).